The chain runs to 200 residues: NADH-quinone oxidoreductase subunit C (200 aa).

It belongs to the complex I 30 kDa subunit family. In terms of assembly, NDH-1 is composed of 14 different subunits. Subunits NuoB, C, D, E, F, and G constitute the peripheral sector of the complex.

It is found in the cell inner membrane. It catalyses the reaction a quinone + NADH + 5 H(+)(in) = a quinol + NAD(+) + 4 H(+)(out). NDH-1 shuttles electrons from NADH, via FMN and iron-sulfur (Fe-S) centers, to quinones in the respiratory chain. The immediate electron acceptor for the enzyme in this species is believed to be ubiquinone. Couples the redox reaction to proton translocation (for every two electrons transferred, four hydrogen ions are translocated across the cytoplasmic membrane), and thus conserves the redox energy in a proton gradient. This chain is NADH-quinone oxidoreductase subunit C, found in Burkholderia vietnamiensis (strain G4 / LMG 22486) (Burkholderia cepacia (strain R1808)).